Reading from the N-terminus, the 465-residue chain is Protein hedgehog (465 aa).

Residue C79 is the site of N-palmitoyl cysteine attachment. Residues E143, E144, D149, T179, E180, D183, and D185 each coordinate Ca(2+). G251 is lipidated: Cholesterol glycine ester.

Belongs to the hedgehog family. Interacts with shf. The C-terminal part of the hedgehog protein precursor displays an autoproteolysis activity that results in the cleavage of the full-length protein into two parts (N-product and C-product). In addition, the C-terminal part displays a cholesterol transferase activity that results by the covalent attachment of a cholesterol moiety to the C-terminal of the newly generated N-product. The N-product is the active species in both local and long-range signaling, whereas the C-product has no signaling activity. Post-translationally, cholesterylation is required for N-product targeting to lipid rafts and multimerization. In terms of processing, N-palmitoylation by Rasp of the hedgehog N-product, within the secretory pathway, is required for the embryonic and larval patterning activities of the hedgehog signal.

Its subcellular location is the nucleus. It is found in the cytoplasm. The protein localises to the cell membrane. The catalysed reaction is glycyl-L-cysteinyl-[protein] + cholesterol + H(+) = [protein]-C-terminal glycyl cholesterol ester + N-terminal L-cysteinyl-[protein]. Functionally, the C-terminal part of the hedgehog protein precursor displays an autoproteolysis activity that results in the cleavage of the full-length protein into two parts (N-product and C-product). In addition, the C-terminal part displays a cholesterol transferase activity that results by the covalent attachment of a cholesterol moiety to the C-terminal of the newly generated N-product. Once cleaved, the C-product has no signaling activity and diffuses from the cell. The dually lipidated hedgehog protein N-product is a morphogen which is essential for a variety of patterning events during development. Establishes the anterior-posterior axis of the embryonic segments and patterns the larval imaginal disks. Binds to the patched (ptc) receptor, which functions in association with smoothened (smo), to activate the transcription of target genes wingless (wg), decapentaplegic (dpp) and ptc. In the absence of hh, ptc represses the constitutive signaling activity of smo through fused (fu). Essential component of a signaling pathway which regulates the Duox-dependent gut immune response to bacterial uracil; required to activate Cad99C-dependent endosome formation, norpA-dependent Ca2+ mobilization and p38 MAPK, which are essential steps in the Duox-dependent production of reactive oxygen species (ROS) in response to intestinal bacterial infection. During photoreceptor differentiation, it up-regulates transcription of Ubr3, which in turn promotes the hh-signaling pathway by mediating the ubiquitination and degradation of cos. The protein is Protein hedgehog of Drosophila yakuba (Fruit fly).